A 254-amino-acid polypeptide reads, in one-letter code: Ribosomal RNA small subunit methyltransferase A (254 aa).

S-adenosyl-L-methionine-binding residues include N12, L14, G38, E59, D83, and N100.

Belongs to the class I-like SAM-binding methyltransferase superfamily. rRNA adenine N(6)-methyltransferase family. RsmA subfamily.

It localises to the cytoplasm. The enzyme catalyses adenosine(1518)/adenosine(1519) in 16S rRNA + 4 S-adenosyl-L-methionine = N(6)-dimethyladenosine(1518)/N(6)-dimethyladenosine(1519) in 16S rRNA + 4 S-adenosyl-L-homocysteine + 4 H(+). Its function is as follows. Specifically dimethylates two adjacent adenosines (A1518 and A1519) in the loop of a conserved hairpin near the 3'-end of 16S rRNA in the 30S particle. May play a critical role in biogenesis of 30S subunits. The protein is Ribosomal RNA small subunit methyltransferase A of Mycoplasma mobile (strain ATCC 43663 / 163K / NCTC 11711) (Mesomycoplasma mobile).